Here is a 134-residue protein sequence, read N- to C-terminus: Ribosome-binding factor A (134 aa).

The protein belongs to the RbfA family. As to quaternary structure, monomer. Binds 30S ribosomal subunits, but not 50S ribosomal subunits or 70S ribosomes.

The protein localises to the cytoplasm. One of several proteins that assist in the late maturation steps of the functional core of the 30S ribosomal subunit. Associates with free 30S ribosomal subunits (but not with 30S subunits that are part of 70S ribosomes or polysomes). Required for efficient processing of 16S rRNA. May interact with the 5'-terminal helix region of 16S rRNA. This chain is Ribosome-binding factor A, found in Cyanothece sp. (strain PCC 7425 / ATCC 29141).